The sequence spans 1061 residues: Bifunctional cytochrome P450/NADPH--P450 reductase 1 (1061 aa).

A cytochrome P450 region spans residues 1–475 (MKETSPIPQP…AEKAAPDEQK (475 aa)). Cysteine 403 contributes to the heme binding site. The segment at 476–1061 (EKTEAKGASV…MYAKDVWAGI (586 aa)) is NADPH--P450 reductase. The Flavodoxin-like domain maps to 493-632 (LLVLYGSDTG…QLDEWKKSMW (140 aa)). FMN is bound by residues 499 to 504 (SDTGTA), 546 to 549 (SYNG), 580 to 582 (CGD), and 588 to 590 (TYQ). The FAD-binding FR-type domain maps to 671-904 (YEASHASIAE…RTPESRFQLP (234 aa)).

The protein in the N-terminal section; belongs to the cytochrome P450 family. The cofactor is FAD. FMN is required as a cofactor. Requires heme b as cofactor.

Its subcellular location is the cytoplasm. The enzyme catalyses an organic molecule + reduced [NADPH--hemoprotein reductase] + O2 = an alcohol + oxidized [NADPH--hemoprotein reductase] + H2O + H(+). It catalyses the reaction 2 oxidized [cytochrome P450] + NADPH = 2 reduced [cytochrome P450] + NADP(+) + H(+). In terms of biological role, functions as a fatty acid monooxygenase. Catalyzes hydroxylation of a range of long-chain fatty acids, with a preference for long-chain unsaturated and branched-chain fatty acids over saturated fatty acids. Hydroxylation of myristic acid occurs mainly at the omega-2 position. Also displays a NADPH-dependent reductase activity in the C-terminal domain, which allows electron transfer from NADPH to the heme iron of the cytochrome P450 N-terminal domain. Is also able to catalyze efficient oxidation of sodium dodecyl sulfate (SDS). The chain is Bifunctional cytochrome P450/NADPH--P450 reductase 1 from Bacillus subtilis (strain 168).